The chain runs to 414 residues: Tryptophan synthase beta chain (414 aa).

The interval 1 to 26 (MVSTFSRKNQNYKKDDLNQPSKDGRF) is disordered. Positions 12–26 (YKKDDLNQPSKDGRF) are enriched in basic and acidic residues. An N6-(pyridoxal phosphate)lysine modification is found at K109.

The protein belongs to the TrpB family. In terms of assembly, tetramer of two alpha and two beta chains. Pyridoxal 5'-phosphate serves as cofactor.

It carries out the reaction (1S,2R)-1-C-(indol-3-yl)glycerol 3-phosphate + L-serine = D-glyceraldehyde 3-phosphate + L-tryptophan + H2O. It participates in amino-acid biosynthesis; L-tryptophan biosynthesis; L-tryptophan from chorismate: step 5/5. The beta subunit is responsible for the synthesis of L-tryptophan from indole and L-serine. This Prochlorococcus marinus (strain MIT 9215) protein is Tryptophan synthase beta chain.